A 101-amino-acid polypeptide reads, in one-letter code: Putative pterin-4-alpha-carbinolamine dehydratase (101 aa).

Belongs to the pterin-4-alpha-carbinolamine dehydratase family.

The enzyme catalyses (4aS,6R)-4a-hydroxy-L-erythro-5,6,7,8-tetrahydrobiopterin = (6R)-L-erythro-6,7-dihydrobiopterin + H2O. This chain is Putative pterin-4-alpha-carbinolamine dehydratase (phhB), found in Ralstonia nicotianae (strain ATCC BAA-1114 / GMI1000) (Ralstonia solanacearum).